Here is a 65-residue protein sequence, read N- to C-terminus: Large ribosomal subunit protein bL35 (65 aa).

Residues 1–22 (MPKIKTVRGAAKRFKKTGKGGF) are disordered. Basic residues predominate over residues 10–22 (AAKRFKKTGKGGF).

The protein belongs to the bacterial ribosomal protein bL35 family.

The polypeptide is Large ribosomal subunit protein bL35 (Klebsiella pneumoniae (strain 342)).